Consider the following 177-residue polypeptide: Large ribosomal subunit protein uL5 (177 aa).

The protein belongs to the universal ribosomal protein uL5 family. As to quaternary structure, part of the 50S ribosomal subunit; part of the 5S rRNA/L5/L18/L25 subcomplex. Contacts the 5S rRNA and the P site tRNA. Forms a bridge to the 30S subunit in the 70S ribosome.

This is one of the proteins that bind and probably mediate the attachment of the 5S RNA into the large ribosomal subunit, where it forms part of the central protuberance. In the 70S ribosome it contacts protein S13 of the 30S subunit (bridge B1b), connecting the 2 subunits; this bridge is implicated in subunit movement. Contacts the P site tRNA; the 5S rRNA and some of its associated proteins might help stabilize positioning of ribosome-bound tRNAs. The polypeptide is Large ribosomal subunit protein uL5 (Ehrlichia chaffeensis (strain ATCC CRL-10679 / Arkansas)).